Reading from the N-terminus, the 27-residue chain is Dermaseptin-S4 (27 aa).

This sequence belongs to the frog skin active peptide (FSAP) family. Dermaseptin subfamily. In terms of assembly, monomer and oligomer. Forms aggregates in aqueous environments. As to expression, expressed by the skin glands.

It is found in the secreted. In terms of biological role, potent antimicrobial peptide with activity against bacteria and protozoa. Also has activity against fungi. Also shows activity against enveloped herpes simplex virus type 1. Probably acts by disturbing membrane functions with its amphipathic structure. Binds to healthy erythrocytes (this binding is receptor independent), and has strong hemolytic activity. Does not bind to P.falciparum infected erythrocytes, but accumulates within the parasite. Kills the parasite, and only at high concentrations has a hemolytic activity on the host cell. In vitro, shows high spermicidal activities. The polypeptide is Dermaseptin-S4 (Phyllomedusa sauvagei (Sauvage's leaf frog)).